The chain runs to 408 residues: Guanine nucleotide-binding protein alpha-14 subunit (408 aa).

GTP contacts are provided by residues 38–45, 78–85, 201–205, 216–222, 241–245, 285–288, 325–328, and alanine 380; these read HSEELEAK, GGPSSGKS, NRISK, VHSRKAT, DVGGQ, FPNF, and NKVD. Residues 70–408 form the G-alpha domain; that stretch reads SHIKILILGG…KANSKATGLS (339 aa). The G1 motif stretch occupies residues 73–86; sequence KILILGGPSSGKST. Serine 85 is a binding site for Mg(2+). Residues 214-222 are G2 motif; the sequence is DIVHSRKAT. Threonine 222 serves as a coordination point for Mg(2+). Residues 237 to 246 form a G3 motif region; it reads LLMVDVGGQR. Positions 321–328 are G4 motif; sequence LLFFNKVD. The segment at 378 to 383 is G5 motif; that stretch reads TTATNT.

This sequence belongs to the G-alpha family. In terms of assembly, g proteins are composed of 3 units; alpha, beta and gamma. The alpha chain contains the guanine nucleotide binding site.

Functionally, guanine nucleotide-binding proteins (G proteins) are involved as modulators or transducers in various transmembrane signaling systems. The sequence is that of Guanine nucleotide-binding protein alpha-14 subunit (gpa-14) from Caenorhabditis briggsae.